We begin with the raw amino-acid sequence, 335 residues long: DNA-directed RNA polymerase subunit alpha (335 aa).

An alpha N-terminal domain (alpha-NTD) region spans residues 1-233; the sequence is MMLNATEFLT…QQISIFVDLE (233 aa). Positions 247–335 are alpha C-terminal domain (alpha-CTD); that stretch reads VDPVLLRPVD…VDDRFSYRSR (89 aa).

This sequence belongs to the RNA polymerase alpha chain family. In terms of assembly, homodimer. The RNAP catalytic core consists of 2 alpha, 1 beta, 1 beta' and 1 omega subunit. When a sigma factor is associated with the core the holoenzyme is formed, which can initiate transcription.

It carries out the reaction RNA(n) + a ribonucleoside 5'-triphosphate = RNA(n+1) + diphosphate. Its function is as follows. DNA-dependent RNA polymerase catalyzes the transcription of DNA into RNA using the four ribonucleoside triphosphates as substrates. This is DNA-directed RNA polymerase subunit alpha from Psychrobacter sp. (strain PRwf-1).